We begin with the raw amino-acid sequence, 392 residues long: NAD(P)H-quinone oxidoreductase subunit H (392 aa).

It belongs to the complex I 49 kDa subunit family. NDH-1 can be composed of about 15 different subunits; different subcomplexes with different compositions have been identified which probably have different functions.

It is found in the cellular thylakoid membrane. It carries out the reaction a plastoquinone + NADH + (n+1) H(+)(in) = a plastoquinol + NAD(+) + n H(+)(out). The enzyme catalyses a plastoquinone + NADPH + (n+1) H(+)(in) = a plastoquinol + NADP(+) + n H(+)(out). In terms of biological role, NDH-1 shuttles electrons from an unknown electron donor, via FMN and iron-sulfur (Fe-S) centers, to quinones in the respiratory and/or the photosynthetic chain. The immediate electron acceptor for the enzyme in this species is believed to be plastoquinone. Couples the redox reaction to proton translocation, and thus conserves the redox energy in a proton gradient. Cyanobacterial NDH-1 also plays a role in inorganic carbon-concentration. The polypeptide is NAD(P)H-quinone oxidoreductase subunit H (Synechococcus sp. (strain JA-2-3B'a(2-13)) (Cyanobacteria bacterium Yellowstone B-Prime)).